Consider the following 483-residue polypeptide: M protein, serotype 6 (483 aa).

Residues methionine 1–alanine 42 form the signal peptide. A coiled-coil region spans residues aspartate 54–glutamate 171. A run of 8 repeats spans residues methionine 69–aspartate 75, lysine 76–asparagine 82, asparagine 83–lysine 89, asparagine 90–lysine 96, asparagine 97–lysine 103, asparagine 104–lysine 110, asparagine 111–lysine 117, and asparagine 118–lysine 124. Residues methionine 69–lysine 138 form a 10 X 7 AA approximate tandem repeats of [KMNR]-L-[TQ]-[TDA]-[ENQ]-N-[NDK] region. Residues asparagine 74 to glutamine 87 are compositionally biased toward polar residues. A disordered region spans residues asparagine 74–glutamate 157. Low complexity predominate over residues asparagine 88 to threonine 113. 2 stretches are compositionally biased toward basic and acidic residues: residues glutamate 122–threonine 135 and lysine 143–glutamate 157. A 9-1; approximate repeat occupies glutamate 125–asparagine 131. 5 consecutive repeat copies span residues arginine 132–lysine 138, glutamate 157–glutamine 181, glutamate 182–glutamine 206, glutamate 207–glutamine 231, and glutamate 232–glutamine 256. Residues glutamate 157–leucine 269 form a 4.5 X 25 AA tandem repeats of E-[NS]-K-E-[TA]-I-G-T-L-K-K-[TI]-L-D-E-T-V-K-D-K-I-A-[KR]-E-Q region. Disordered regions lie at residues glutamate 255 to lysine 298 and valine 314 to alanine 345. Residues lysine 257 to leucine 269 form a 5-2; truncated repeat. Basic and acidic residues-rich tracts occupy residues glutamate 268–lysine 298 and leucine 328–alanine 345. C repeat units lie at residues alanine 270–leucine 304 and aspartate 312–leucine 346. The interval serine 279–glutamate 347 is binding to CD46. Residues serine 279–glutamate 347 form a two directly repeated 27 amino acid blocks separated by 15 amino acids region. Residues glutamate 280 to serine 408 are a coiled coil. Residues glutamate 348 to glutamine 411 form a hydrophilic region. D repeat units follow at residues alanine 379–glutamate 384, alanine 385–glutamate 390, alanine 393–glutamate 398, and alanine 400–glycine 405. A disordered region spans residues alanine 400–threonine 455. An LPXTG sorting signal motif is present at residues leucine 449–glycine 453. Threonine 452 bears the Pentaglycyl murein peptidoglycan amidated threonine mark. A propeptide spans glycine 453–asparagine 483 (removed by sortase).

The protein belongs to the M protein family.

Its subcellular location is the secreted. It is found in the cell wall. Functionally, mediates the attachment of S.pyogenes to skin epithelial cells through the binding of the human membrane cofactor protein CD46. Also binds to the factor H and factor H-like protein 1. These interactions could contribute to the fact that the M6 protein protects the bacterium from the phagocytosis by regulating the complement activation on the bacterial surface. The polypeptide is M protein, serotype 6 (emm6) (Streptococcus pyogenes).